The primary structure comprises 458 residues: Divalent metal cation transporter MntH (458 aa).

The next 11 helical transmembrane spans lie at 38–58 (GFWKTLMAFMGPGALVAVGYM), 86–106 (LIAMLLQAMAARLGIVTGMDL), 119–139 (GIFLWIVTELAIMATDIAEII), 151–171 (IPLLWGVLITAFDVLLLLLLM), 180–200 (AIVATLVAVILFVFLYEVILA), 223–243 (MLFLALGIVGATVMPHNLYLH), 275–295 (LTIAFVVNCLLLILGAAMFYG), 315–335 (IVGSIASPMLSLLFAVALLAS), 370–390 (GLSILPVIIFTVYYHGNEAQV), 395–415 (IYSQVFLSIALPVSMIPLTLF), and 436–456 (WFVTIVLTLLNIYLILQTVGL).

The protein belongs to the NRAMP family.

It is found in the cell membrane. Its function is as follows. H(+)-stimulated, divalent metal cation uptake system. The protein is Divalent metal cation transporter MntH of Latilactobacillus sakei subsp. sakei (strain 23K) (Lactobacillus sakei subsp. sakei).